The sequence spans 465 residues: E3 ubiquitin-protein ligase TRIM38 (465 aa).

Residues 16-63 form an RING-type zinc finger; sequence CSICLSLMTNPVSINCGHSYCHLCITDFFKNPSQKQLRQETFCCPQCR. S70 is modified (phosphoserine). The B box-type zinc-finger motif lies at 88–129; it reads DQEMSCEEHGEQFHLFCEDEGQLICWRCERAPQHKGHTTALV. Residues C93, H96, C115, and H121 each coordinate Zn(2+). Residues 274-465 enclose the B30.2/SPRY domain; that stretch reads CNVSKLYFDV…SPLFLPPPGD (192 aa).

As to quaternary structure, interacts (via B30.2/SPRY domain) with TAB2 and TAB3. As to expression, ubiquitous.

The protein localises to the cytoplasm. It catalyses the reaction S-ubiquitinyl-[E2 ubiquitin-conjugating enzyme]-L-cysteine + [acceptor protein]-L-lysine = [E2 ubiquitin-conjugating enzyme]-L-cysteine + N(6)-ubiquitinyl-[acceptor protein]-L-lysine.. It functions in the pathway protein modification; protein ubiquitination. It participates in protein modification; protein sumoylation. Functionally, E3 ubiquitin-protein and E3 SUMO-protein ligase that acts as a regulator of innate immunity. Acts as a negative regulator of type I interferon IFN-beta production by catalyzing 'Lys-48'-linked polyubiquitination of AZI2/NAP1, leading to its degradation. Mediates 'Lys-48'-linked polyubiquitination and proteasomal degradation of the critical TLR adapter TICAM1, inhibiting TLR3-mediated type I interferon signaling. Acts as positive regulator of the cGAS-STING pathway by acting as a E3 SUMO-protein ligase: mediates sumoylation of CGAS and STING, preventing their degradation and thereby activating the innate immune response to DNA virus. Also acts as a negative regulator of NF-kappa-B signaling independently of its E3 protein ligase activity by promoting lysosome-dependent degradation of TAB2 and TAB3 adapters. The sequence is that of E3 ubiquitin-protein ligase TRIM38 from Homo sapiens (Human).